The sequence spans 301 residues: Acetylglutamate kinase (301 aa).

Residues 68-69 (GG), R90, and N195 each bind substrate.

This sequence belongs to the acetylglutamate kinase family. ArgB subfamily.

It localises to the cytoplasm. It catalyses the reaction N-acetyl-L-glutamate + ATP = N-acetyl-L-glutamyl 5-phosphate + ADP. The protein operates within amino-acid biosynthesis; L-arginine biosynthesis; N(2)-acetyl-L-ornithine from L-glutamate: step 2/4. In terms of biological role, catalyzes the ATP-dependent phosphorylation of N-acetyl-L-glutamate. In Pseudomonas putida (strain W619), this protein is Acetylglutamate kinase.